A 575-amino-acid polypeptide reads, in one-letter code: Cyclic nucleotide-gated channel alpha-4 (575 aa).

Residues 1–38 (MSQDGKVKTTESTPPAPTKARKWLPVLDPSGDYYYWWL) lie on the Cytoplasmic side of the membrane. Residues 39 to 60 (NTMVFPIMYNLIIVVCRACFPD) form a helical membrane-spanning segment. Topologically, residues 61–70 (LQHSYLVAWF) are extracellular. A helical membrane pass occupies residues 71 to 91 (VLDYTSDLLYLLDIGVRFHTG). Residues 92 to 116 (FLEQGILVVDKGMIASRYVRTWSFL) are Cytoplasmic-facing. Residues 117 to 135 (LDLASLVPTDAAYVQLGPH) traverse the membrane as a helical segment. Residues 136–140 (IPTLR) are Extracellular-facing. The chain crosses the membrane as a helical span at residues 141–159 (LNRFLRVPRLFEAFDRTET). The Cytoplasmic portion of the chain corresponds to 160 to 166 (RTAYPNA). An ion conduction pathway region spans residues 164-272 (PNAFRIAKLM…GSMSSVIYNM (109 aa)). Residues 167–190 (FRIAKLMLYIFVVIHWNSCLYFAL) traverse the membrane as a helical segment. Residues 191-213 (SRYLGFGRDAWVYPDPAQPGFER) are Extracellular-facing. The next 2 helical transmembrane spans lie at 214 to 248 (LRRQ…LFMV) and 249 to 273 (GDFL…YNMN). The selectivity filter stretch occupies residues 231-234 (TVGD). Residues 274-350 (TADAAFYPDH…STLSRVQIFQ (77 aa)) form a C-linker region. At 274 to 575 (TADAAFYPDH…AGQAGPSGIE (302 aa)) the chain is on the cytoplasmic side. An IQ-type motif is present at residues 292-302 (LQHVNKRLERR). 348-471 (IFQNCEASLL…AVMEEKGREI (124 aa)) serves as a coordination point for a nucleoside 3',5'-cyclic phosphate. A cyclic nucleotide-binding domain region spans residues 354-474 (ASLLEELVLK…EEKGREILLK (121 aa)). Residues Gly414, Ser417, Arg430, and Thr431 each contribute to the 3',5'-cyclic GMP site. Residues Arg430 and Thr431 each coordinate 3',5'-cyclic AMP. Residues 493 to 547 (TESRLKGLDQQLDDLQTKFARLLAELESSALKIAYRIERLEWQTREWPMPEDMGE) are a coiled coil. The tract at residues 537 to 575 (REWPMPEDMGEADDEAEPGEGTSKDGEGKAGQAGPSGIE) is disordered. A compositionally biased stretch (acidic residues) spans 544–554 (DMGEADDEAEP).

The protein belongs to the cyclic nucleotide-gated cation channel (TC 1.A.1.5) family. CNGA4 subfamily. In terms of assembly, the olfactory cyclic nucleotide-gated channel is an heterotetramer composed of CNGA2, CNGA4 and CNGB1b subunits with 2:1:1 stoichiometry. May form homomeric channels gated by nitric oxide. N-glycosylated. As to expression, olfactory neurons. Expressed in olfactory sensory cilia (at protein level).

The protein localises to the cell projection. Its subcellular location is the cilium membrane. The enzyme catalyses Ca(2+)(in) = Ca(2+)(out). The catalysed reaction is Na(+)(in) = Na(+)(out). It catalyses the reaction K(+)(in) = K(+)(out). It carries out the reaction NH4(+)(in) = NH4(+)(out). The enzyme catalyses Rb(+)(in) = Rb(+)(out). The catalysed reaction is Li(+)(in) = Li(+)(out). It catalyses the reaction Cs(+)(in) = Cs(+)(out). With respect to regulation, ca(2+)-calmodulin exerts its inhibitory effect in cAMP sensitivity by binding to IQ-like motif of CNGA4 and preferably binds to the channel in the closed state. Inhibition by PIP3 of the CNG channel probably occurs via CGNA2 binding. Ca(2+) currents are inhibited by pimozide, an L-type Ca(2+) channel blocker. In terms of biological role, pore-forming subunit of the olfactory cyclic nucleotide-gated channel. Operates in the cilia of olfactory sensory neurons where chemical stimulation of the odorant is converted to an electrical signal. Mediates odorant-induced cAMP-dependent Ca(2+) influx triggering neuron depolarization. The rise of intracellular Ca(2+) levels potentiates the olfactory response by activating Ca(2+)-dependent Cl(-) channels, but it also serves as a negative feedback signal to desensitize the channel for rapid adaptation to odorants. Conducts cAMP- and cGMP-gated ion currents, with permeability for monovalent and divalent cations. May conduct nitric oxide-gated Ca(2+) currents relevant to neurons of vomeronasal organ, a system involved in the perception of pheromones. This Rattus norvegicus (Rat) protein is Cyclic nucleotide-gated channel alpha-4.